The primary structure comprises 711 residues: Protein ACTIVITY OF BC1 COMPLEX KINASE 3, chloroplastic (711 aa).

A chloroplast-targeting transit peptide spans 1-42; the sequence is MSLVVGQSLGLTLVGDGLSLRNSKINVGKSKFFSVNRRRLAR. In terms of domain architecture, Protein kinase spans 216-546; it reads SVSPEPIAAA…IELLFKDGKF (331 aa). ATP-binding positions include 222 to 230 and lysine 245; that span reads IAAASLGQV. The active-site Proton acceptor is aspartate 379.

It belongs to the protein kinase superfamily. ADCK protein kinase family. As to quaternary structure, interacts with ABC1K1 in plastoglobules (PG). Interacts with PGM48.

It is found in the plastid. The protein resides in the chloroplast. Its subcellular location is the plastoglobule. It carries out the reaction L-seryl-[protein] + ATP = O-phospho-L-seryl-[protein] + ADP + H(+). The enzyme catalyses L-threonyl-[protein] + ATP = O-phospho-L-threonyl-[protein] + ADP + H(+). Functionally, kinase that can phosphorylate the tocopherol cyclase VTE1, a key enzyme of tocopherol (vitamin E) metabolism and involved in the recycling of oxidated alpha-tocopherol quinone, possibly stabilizing it at plastoglobules. Also regulates membrane prenylquinone composition. Required for photooxidative stress responses to prevent photosystem II core and chlorophyll degradations. Together with ABC1K1, contributes to plastoglobule (PG) function in prenyl-lipid metabolism, stress response, and thylakoid remodeling. Promotes photodamage of chloroplasts under continuous red light, thus working in opposition to ABC1K1. The chain is Protein ACTIVITY OF BC1 COMPLEX KINASE 3, chloroplastic from Arabidopsis thaliana (Mouse-ear cress).